The chain runs to 88 residues: MGTARFLSAVLLLSVLLMVTFPALLSAEYHDGRVDICSLPYDSGDCLRFFEMWYFDGTTCTKFVYGGYGGNDNRFPTEKACMKRCAKA.

The first 27 residues, 1 to 27, serve as a signal peptide directing secretion; sequence MGTARFLSAVLLLSVLLMVTFPALLSA. A propeptide spanning residues 28-33 is cleaved from the precursor; it reads EYHDGR. Residues 37-85 enclose the BPTI/Kunitz inhibitor domain; the sequence is CSLPYDSGDCLRFFEMWYFDGTTCTKFVYGGYGGNDNRFPTEKACMKRC. Disulfide bonds link Cys37-Cys85 and Cys60-Cys81.

It belongs to the venom Kunitz-type family. 03 (sub-Kunitz) subfamily. As to expression, expressed by the venom gland.

Its subcellular location is the secreted. Serine protease inhibitor that inhibits trypsin at a molar ratio of 1:1. This is Kunitz-type U15-theraphotoxin-Hs1b from Cyriopagopus schmidti (Chinese bird spider).